The following is a 290-amino-acid chain: ATP synthase gamma chain (290 aa).

Belongs to the ATPase gamma chain family. In terms of assembly, F-type ATPases have 2 components, CF(1) - the catalytic core - and CF(0) - the membrane proton channel. CF(1) has five subunits: alpha(3), beta(3), gamma(1), delta(1), epsilon(1). CF(0) has three main subunits: a, b and c.

The protein resides in the cell inner membrane. Produces ATP from ADP in the presence of a proton gradient across the membrane. The gamma chain is believed to be important in regulating ATPase activity and the flow of protons through the CF(0) complex. The protein is ATP synthase gamma chain of Bradyrhizobium diazoefficiens (strain JCM 10833 / BCRC 13528 / IAM 13628 / NBRC 14792 / USDA 110).